The sequence spans 97 residues: Acylphosphatase (97 aa).

Residues 7–97 enclose the Acylphosphatase-like domain; that stretch reads RLTAWVHGHV…QERFEGFVER (91 aa). Catalysis depends on residues Arg-22 and Asn-40.

This sequence belongs to the acylphosphatase family.

It carries out the reaction an acyl phosphate + H2O = a carboxylate + phosphate + H(+). The protein is Acylphosphatase (acyP) of Mycobacterium avium (strain 104).